The sequence spans 755 residues: 1,4-alpha-glucan branching enzyme GlgB (755 aa).

D431 serves as the catalytic Nucleophile. The Proton donor role is filled by E484.

The protein belongs to the glycosyl hydrolase 13 family. GlgB subfamily. In terms of assembly, monomer.

It catalyses the reaction Transfers a segment of a (1-&gt;4)-alpha-D-glucan chain to a primary hydroxy group in a similar glucan chain.. It functions in the pathway glycan biosynthesis; glycogen biosynthesis. Its function is as follows. Catalyzes the formation of the alpha-1,6-glucosidic linkages in glycogen by scission of a 1,4-alpha-linked oligosaccharide from growing alpha-1,4-glucan chains and the subsequent attachment of the oligosaccharide to the alpha-1,6 position. The polypeptide is 1,4-alpha-glucan branching enzyme GlgB (Prochlorococcus marinus (strain NATL2A)).